We begin with the raw amino-acid sequence, 228 residues long: 7-cyano-7-deazaguanine synthase (228 aa).

An ATP-binding site is contributed by 8–18 (LSGGMDSATTL). Zn(2+) contacts are provided by Cys188, Cys198, Cys201, and Cys204.

It belongs to the QueC family. It depends on Zn(2+) as a cofactor.

The catalysed reaction is 7-carboxy-7-deazaguanine + NH4(+) + ATP = 7-cyano-7-deazaguanine + ADP + phosphate + H2O + H(+). It functions in the pathway purine metabolism; 7-cyano-7-deazaguanine biosynthesis. Its function is as follows. Catalyzes the ATP-dependent conversion of 7-carboxy-7-deazaguanine (CDG) to 7-cyano-7-deazaguanine (preQ(0)). This is 7-cyano-7-deazaguanine synthase from Nitrosomonas europaea (strain ATCC 19718 / CIP 103999 / KCTC 2705 / NBRC 14298).